A 1040-amino-acid chain; its full sequence is Multidrug resistance protein MdtB (1040 aa).

Helical transmembrane passes span 16–36 (FILR…AGII), 347–367 (LMLA…NIPA), 369–389 (IIPA…MVFL), 396–416 (LTLM…IVVI), 440–460 (IGFT…PLLF), 472–492 (FAVT…TLTP), 537–557 (WLTL…WIFI), 863–883 (LGST…VLGV), 888–908 (FIHP…ALLA), 911–931 (IAGA…IGIV), 968–988 (ILMT…STGV), and 998–1018 (IGMV…TPVI).

It belongs to the resistance-nodulation-cell division (RND) (TC 2.A.6) family. MdtB subfamily. In terms of assembly, part of a tripartite efflux system composed of MdtA, MdtB and MdtC. MdtB forms a heteromultimer with MdtC.

The protein resides in the cell inner membrane. The chain is Multidrug resistance protein MdtB from Cronobacter sakazakii (strain ATCC BAA-894) (Enterobacter sakazakii).